Here is a 466-residue protein sequence, read N- to C-terminus: Delta-1 crystallin (466 aa).

It belongs to the lyase 1 family. Argininosuccinate lyase subfamily. In terms of assembly, homotetramer. In terms of tissue distribution, eye lens.

In terms of biological role, delta crystallin, the principal crystallin in embryonic lens, is found only in birds and reptiles. Despite possessing the necessary catalytic residues, this protein does not function as an enzymatically active argininosuccinate lyase. The polypeptide is Delta-1 crystallin (ASL1) (Anas platyrhynchos (Mallard)).